Reading from the N-terminus, the 391-residue chain is MAIINMSDLDLQGKRVLIREDLNVPVSNGVVTSDARLRASLPTIELALAKGAAVMVMSHLGRPTEGEYNSEFSMQPVVDYLAKALSCPVRLATDYLDGVEVAVGEVVVFENVRFNKGEKKNDEALSKKMAALCDVYVMDAFGTAHRAEASTNGVGLHAPIACAGPLLAQELEALGKALDNPARPLVAIVGGSKVSTKLTVLESLSGIVDQLVVGGGIANTFIAAAGHNVGKSLYEADLIDEAKRLVANAQSRGGDIPVPTDVVVAGEFSPTAAATLKAVNEVGDSDMIFDIGPDSAEALAKIIESAGTIVWNGPVGVFEFDQFGEGTKRIAQAIADSKAFSIAGGGDTLAAVDKYDIADKVSYISTGGGAFLEFLEGKELPAVAMLKQRGA.

Substrate-binding positions include 21 to 23 (DLN), Arg36, 59 to 62 (HLGR), Arg113, and Arg146. ATP is bound by residues Lys197, Glu319, and 345–348 (GGDT).

The protein belongs to the phosphoglycerate kinase family. In terms of assembly, monomer.

The protein localises to the cytoplasm. It carries out the reaction (2R)-3-phosphoglycerate + ATP = (2R)-3-phospho-glyceroyl phosphate + ADP. It functions in the pathway carbohydrate degradation; glycolysis; pyruvate from D-glyceraldehyde 3-phosphate: step 2/5. In Shewanella sp. (strain ANA-3), this protein is Phosphoglycerate kinase.